Reading from the N-terminus, the 346-residue chain is Heat-inducible transcription repressor HrcA (346 aa).

Belongs to the HrcA family.

In terms of biological role, negative regulator of class I heat shock genes (grpE-dnaK-dnaJ and groELS operons). Prevents heat-shock induction of these operons. The chain is Heat-inducible transcription repressor HrcA from Erythrobacter litoralis (strain HTCC2594).